A 692-amino-acid polypeptide reads, in one-letter code: Proprotein convertase subtilisin/kexin type 9 (692 aa).

The first 30 residues, 1–30 (MGTVSSRRSWWPLPLPLLLLLLLGPAGARA), serve as a signal peptide directing secretion. A propeptide spanning residues 31–152 (QEDEDGDYEE…IEEDSSVFAQ (122 aa)) is cleaved from the precursor. Sulfotyrosine is present on Tyr-38. A Phosphoserine modification is found at Ser-47. An Inhibitor I9 domain is found at 77–149 (TYVVVLKEET…VDYIEEDSSV (73 aa)). The region spanning 155-444 (PWNLERITPA…VLTPNLVAAL (290 aa)) is the Peptidase S8 domain. Active-site charge relay system residues include Asp-186 and His-226. Intrachain disulfides connect Cys-223-Cys-255 and Cys-323-Cys-358. Catalysis depends on Ser-386, which acts as the Charge relay system. Residues 450–692 (RAGWQLFCRT…HLVQASQELQ (243 aa)) form a C-terminal domain region. Intrachain disulfides connect Cys-457–Cys-527, Cys-477–Cys-526, and Cys-486–Cys-509. N-linked (GlcNAc...) asparagine glycosylation occurs at Asn-533. 6 cysteine pairs are disulfide-bonded: Cys-534/Cys-601, Cys-552/Cys-600, Cys-562/Cys-588, Cys-608/Cys-679, Cys-626/Cys-678, and Cys-635/Cys-654. A Phosphoserine modification is found at Ser-688.

The protein belongs to the peptidase S8 family. Monomer. Can self-associate to form dimers and higher multimers which may have increased LDLR degrading activity. The precursor protein but not the mature protein may form multimers. Interacts with APOB, VLDLR, LRP8/APOER2 and BACE1. The full-length immature form (pro-PCSK9) interacts with SCNN1A, SCNN1B and SCNN1G. The pro-PCSK9 form (via C-terminal domain) interacts with LDLR. Interacts (via the C-terminal domain) with ANXA2 (via repeat Annexin 1); the interaction inhibits the degradation of LDLR. It depends on Ca(2+) as a cofactor. Cleavage by furin and PCSK5 generates a truncated inactive protein that is unable to induce LDLR degradation. Post-translationally, undergoes autocatalytic cleavage in the endoplasmic reticulum to release the propeptide from the N-terminus and the cleavage of the propeptide is strictly required for its maturation and activation. The cleaved propeptide however remains associated with the catalytic domain through non-covalent interactions, preventing potential substrates from accessing its active site. As a result, it is secreted from cells as a propeptide-containing, enzymatically inactive protein. In terms of processing, phosphorylation protects the propeptide against proteolysis.

Its subcellular location is the cytoplasm. It localises to the secreted. The protein resides in the endosome. The protein localises to the lysosome. It is found in the cell surface. Its subcellular location is the endoplasmic reticulum. It localises to the golgi apparatus. Its activity is regulated as follows. Its proteolytic activity is autoinhibited by the non-covalent binding of the propeptide to the catalytic domain. Inhibited by EGTA. Functionally, crucial player in the regulation of plasma cholesterol homeostasis. Binds to low-density lipid receptor family members: low density lipoprotein receptor (LDLR), very low density lipoprotein receptor (VLDLR), apolipoprotein E receptor (LRP1/APOER) and apolipoprotein receptor 2 (LRP8/APOER2), and promotes their degradation in intracellular acidic compartments. Acts via a non-proteolytic mechanism to enhance the degradation of the hepatic LDLR through a clathrin LDLRAP1/ARH-mediated pathway. May prevent the recycling of LDLR from endosomes to the cell surface or direct it to lysosomes for degradation. Can induce ubiquitination of LDLR leading to its subsequent degradation. Inhibits intracellular degradation of APOB via the autophagosome/lysosome pathway in a LDLR-independent manner. Involved in the disposal of non-acetylated intermediates of BACE1 in the early secretory pathway. Inhibits epithelial Na(+) channel (ENaC)-mediated Na(+) absorption by reducing ENaC surface expression primarily by increasing its proteasomal degradation. Regulates neuronal apoptosis via modulation of LRP8/APOER2 levels and related anti-apoptotic signaling pathways. The polypeptide is Proprotein convertase subtilisin/kexin type 9 (PCSK9) (Macaca mulatta (Rhesus macaque)).